The chain runs to 1736 residues: Centrosomal protein of 152 kDa (1736 aa).

The tract at residues 1 to 60 (MSLEFGSVALQTQNEDEEFDKEDFEREKELQQLLTDLPHDMLDDELSSPERHDSDCSMDG) is interaction with PLK4. Positions 1–127 (MSLEFGSVAL…SGYSPPGKRE (127 aa)) are disordered. 2 stretches are compositionally biased toward basic and acidic residues: residues 61 to 82 (RAAEPHPSEHLERKWIERDILP) and 94 to 105 (EENRSKTEDQHL). 6 coiled-coil regions span residues 228–481 (IIQL…AELG), 552–651 (HLVS…QEFD), 692–776 (LEVY…TERQ), 835–868 (AAVSKAEAAAVLAEEQARQVQQEKELATKEALRK), 950–1075 (NVMS…YEED), and 1205–1315 (GHCF…KIKR). The tract at residues 571 to 592 (FQQSKDGDSGMETKTDTSEKTT) is disordered. Positions 575–592 (KDGDSGMETKTDTSEKTT) are enriched in basic and acidic residues. Residue T1277 is modified to Phosphothreonine. 4 disordered regions span residues 1416–1479 (GTER…ASTA), 1543–1562 (EKNSSPRCISESRHTTLRSP), 1574–1614 (GSPT…SDST), and 1677–1736 (QQGK…SPLE). The span at 1462–1473 (RRLEESKHREMR) shows a compositional bias: basic and acidic residues. 2 stretches are compositionally biased toward polar residues: residues 1576-1595 (PTETDSIASEKSQGVGSQDS) and 1603-1614 (PSSSPAWPSDST). K1714 is modified (N6-acetyllysine).

It belongs to the CEP152 family. As to quaternary structure, interacts (via N-terminus) with PLK4; the interaction is mutally exclusive with a PLK4:CEP192 interaction. Interacts (via C-terminus) with CPAP (via-N-terminus). Interacts with CINP. Interacts with CDK5RAP2, WDR62, CEP63 and CEP131. CEP63, CDK5RAP2, CEP152, WDR62 are proposed to form a stepwise assembled complex at the centrosome forming a ring near parental centrioles. Interacts with DEUP1; this interaction recruits CEP152 to the deuterosome. The interactions with CEP63 and DEUP1 are mutually exclusive. Interacts with CCDC66.

Its subcellular location is the cytoplasm. It is found in the cytoskeleton. The protein resides in the microtubule organizing center. It localises to the centrosome. The protein localises to the centriole. Its function is as follows. Necessary for centrosome duplication; the function also seems to involve CEP63, CDK5RAP2 and WDR62 through a stepwise assembled complex at the centrosome that recruits CDK2 required for centriole duplication. Acts as a molecular scaffold facilitating the interaction of PLK4 and CPAP, 2 molecules involved in centriole formation. Proposed to snatch PLK4 away from PLK4:CEP92 complexes in early G1 daughter centriole and to reposition PLK4 at the outer boundary of a newly forming CEP152 ring structure. Also plays a key role in deuterosome-mediated centriole amplification in multiciliated that can generate more than 100 centrioles. Overexpression of cep152 can drive amplification of centrioles. The chain is Centrosomal protein of 152 kDa (Cep152) from Mus musculus (Mouse).